The following is a 292-amino-acid chain: Ribosomal protein L11 methyltransferase (292 aa).

The S-adenosyl-L-methionine site is built by T143, G164, D186, and N227.

It belongs to the methyltransferase superfamily. PrmA family.

It is found in the cytoplasm. It carries out the reaction L-lysyl-[protein] + 3 S-adenosyl-L-methionine = N(6),N(6),N(6)-trimethyl-L-lysyl-[protein] + 3 S-adenosyl-L-homocysteine + 3 H(+). Its function is as follows. Methylates ribosomal protein L11. The protein is Ribosomal protein L11 methyltransferase of Hahella chejuensis (strain KCTC 2396).